Reading from the N-terminus, the 501-residue chain is Sucrose transport protein SUT2 (501 aa).

Topologically, residues Met-1–Ala-31 are cytoplasmic. A helical transmembrane segment spans residues Ser-32 to Val-52. Residues Gln-53 to Leu-55 are Extracellular-facing. A helical membrane pass occupies residues Gly-56 to Val-76. Over Gln-77 to Arg-98 the chain is Cytoplasmic. A helical transmembrane segment spans residues Pro-99 to Ala-119. Over Asp-120 to Arg-135 the chain is Extracellular. Residues Leu-136 to Thr-156 form a helical membrane-spanning segment. Residues Gln-157–Arg-176 lie on the Cytoplasmic side of the membrane. A helical transmembrane segment spans residues Ile-177–Gly-197. At Ala-198–Lys-222 the chain is on the extracellular side. A helical membrane pass occupies residues Ser-223–Val-243. Residues Gln-244–Pro-278 lie on the Cytoplasmic side of the membrane. The helical transmembrane segment at Val-279–Phe-299 threads the bilayer. Over Asp-300–Arg-327 the chain is Extracellular. A helical transmembrane segment spans residues Met-328 to Glu-348. The Cytoplasmic segment spans residues Lys-349–Ala-356. The helical transmembrane segment at Gly-357–Ile-377 threads the bilayer. Residues Thr-378–Thr-394 are Extracellular-facing. The chain crosses the membrane as a helical span at residues Gly-395 to Tyr-415. The Cytoplasmic portion of the chain corresponds to Ser-416–Gln-433. A helical transmembrane segment spans residues Gly-434–Gly-454. The Extracellular portion of the chain corresponds to Ser-455–Ala-467. Residues Pro-468–Leu-488 form a helical membrane-spanning segment. The Cytoplasmic segment spans residues Pro-489–Arg-501.

Belongs to the glycoside-pentoside-hexuronide (GPH) cation symporter transporter (TC 2.A.2.4) family. As to quaternary structure, homodimer. In terms of tissue distribution, expressed in source leaf blades.

It localises to the cell membrane. The protein operates within glycan biosynthesis; sucrose metabolism. Functionally, responsible for the transport of sucrose into the cell, with the concomitant uptake of protons (symport system). May also transport other glucosides. The polypeptide is Sucrose transport protein SUT2 (SUT2) (Oryza sativa subsp. indica (Rice)).